The chain runs to 253 residues: uncharacterized protein (253 aa).

This sequence belongs to the NAD(P)-dependent epimerase/dehydratase family.

This is an uncharacterized protein from Bacillus subtilis (strain 168).